Here is a 528-residue protein sequence, read N- to C-terminus: Glucose-6-phosphate isomerase (528 aa).

Residue Glu322 is the Proton donor of the active site. Residues His351 and Lys455 contribute to the active site.

This sequence belongs to the GPI family.

Its subcellular location is the cytoplasm. The catalysed reaction is alpha-D-glucose 6-phosphate = beta-D-fructose 6-phosphate. The protein operates within carbohydrate biosynthesis; gluconeogenesis. It participates in carbohydrate degradation; glycolysis; D-glyceraldehyde 3-phosphate and glycerone phosphate from D-glucose: step 2/4. Catalyzes the reversible isomerization of glucose-6-phosphate to fructose-6-phosphate. The sequence is that of Glucose-6-phosphate isomerase from Nostoc sp. (strain PCC 7120 / SAG 25.82 / UTEX 2576).